A 190-amino-acid chain; its full sequence is Xanthine phosphoribosyltransferase 2 (190 aa).

Xanthine contacts are provided by Leu20 and Asn27. 129 to 133 provides a ligand contact to 5-phospho-alpha-D-ribose 1-diphosphate; the sequence is ANGCA. Residue Lys157 participates in xanthine binding.

Belongs to the purine/pyrimidine phosphoribosyltransferase family. Xpt subfamily. As to quaternary structure, homodimer.

It is found in the cytoplasm. The enzyme catalyses XMP + diphosphate = xanthine + 5-phospho-alpha-D-ribose 1-diphosphate. Its pathway is purine metabolism; XMP biosynthesis via salvage pathway; XMP from xanthine: step 1/1. Its function is as follows. Converts the preformed base xanthine, a product of nucleic acid breakdown, to xanthosine 5'-monophosphate (XMP), so it can be reused for RNA or DNA synthesis. The protein is Xanthine phosphoribosyltransferase 2 of Clostridium botulinum (strain ATCC 19397 / Type A).